The sequence spans 606 residues: DNA mismatch repair protein MutL (606 aa).

The tract at residues 340–366 (MNAFRPGYSPSGLRPSPSATWSAATSP) is disordered. Residues 353–366 (RPSPSATWSAATSP) show a composition bias toward low complexity.

This sequence belongs to the DNA mismatch repair MutL/HexB family.

In terms of biological role, this protein is involved in the repair of mismatches in DNA. It is required for dam-dependent methyl-directed DNA mismatch repair. May act as a 'molecular matchmaker', a protein that promotes the formation of a stable complex between two or more DNA-binding proteins in an ATP-dependent manner without itself being part of a final effector complex. The sequence is that of DNA mismatch repair protein MutL from Agrobacterium fabrum (strain C58 / ATCC 33970) (Agrobacterium tumefaciens (strain C58)).